The primary structure comprises 329 residues: GMP reductase (329 aa).

Cys-178 serves as the catalytic Thioimidate intermediate. Residue 207 to 230 coordinates NADP(+); it reads IIADGGIRNNGDIAKSIRFGATMC.

Belongs to the IMPDH/GMPR family. GuaC type 2 subfamily.

The enzyme catalyses IMP + NH4(+) + NADP(+) = GMP + NADPH + 2 H(+). Its function is as follows. Catalyzes the irreversible NADPH-dependent deamination of GMP to IMP. It functions in the conversion of nucleobase, nucleoside and nucleotide derivatives of G to A nucleotides, and in maintaining the intracellular balance of A and G nucleotides. The chain is GMP reductase from Lacticaseibacillus casei (strain BL23) (Lactobacillus casei).